Here is a 165-residue protein sequence, read N- to C-terminus: Lipoprotein signal peptidase (165 aa).

3 consecutive transmembrane segments (helical) span residues 9-29, 69-89, and 100-120; these read LLTI…VLLY, KYFL…FLFL, and FSLI…FFYN. Residues Asp-124 and Asp-142 contribute to the active site. The helical transmembrane segment at 133 to 153 threads the bilayer; it reads WSFPTFNFADIFISLGTLIFV.

This sequence belongs to the peptidase A8 family.

The protein resides in the cell inner membrane. It catalyses the reaction Release of signal peptides from bacterial membrane prolipoproteins. Hydrolyzes -Xaa-Yaa-Zaa-|-(S,diacylglyceryl)Cys-, in which Xaa is hydrophobic (preferably Leu), and Yaa (Ala or Ser) and Zaa (Gly or Ala) have small, neutral side chains.. It functions in the pathway protein modification; lipoprotein biosynthesis (signal peptide cleavage). This protein specifically catalyzes the removal of signal peptides from prolipoproteins. This Chlamydia felis (strain Fe/C-56) (Chlamydophila felis) protein is Lipoprotein signal peptidase.